A 325-amino-acid polypeptide reads, in one-letter code: MSDMASWQPSAPVANLLKRASILSTIRRFFSDRGVLEVDTPSMSQATVTDVHLVPFQTHFVGPGVAQGMMLYLMTSPEYHMKRLLAAGSGPIYQLCRSFRNEESGRYHNPEFTMLEWYRPHYDMYRLMNEVDDLLQQVLECESAETLSYQQAFIRHLDVDPLSADKTQLREVAAKLDLSNVADNEEDRDTLLQLLFAFGVEPHIGKERPVFVYHFPASQASLAQISTEDHRVAERFEVYYRGVELANGFHELTDAAEQRQRFEQDNRKRAAAGLPQQPIDEHLLAALEHGMPDSSGVALGVDRLIMLALSAERLSEVIAFSVDRA.

76–78 provides a ligand contact to substrate; sequence SPE. ATP is bound by residues 100 to 102 and Asn-109; that span reads RNE. Residue Tyr-118 coordinates substrate. Residue 244–245 coordinates ATP; it reads EL. Position 251 (Glu-251) interacts with substrate. Gly-300 contributes to the ATP binding site.

This sequence belongs to the class-II aminoacyl-tRNA synthetase family. EpmA subfamily. In terms of assembly, homodimer.

The enzyme catalyses D-beta-lysine + L-lysyl-[protein] + ATP = N(6)-((3R)-3,6-diaminohexanoyl)-L-lysyl-[protein] + AMP + diphosphate + H(+). With EpmB is involved in the beta-lysylation step of the post-translational modification of translation elongation factor P (EF-P). Catalyzes the ATP-dependent activation of (R)-beta-lysine produced by EpmB, forming a lysyl-adenylate, from which the beta-lysyl moiety is then transferred to the epsilon-amino group of a conserved specific lysine residue in EF-P. The sequence is that of Elongation factor P--(R)-beta-lysine ligase from Edwardsiella ictaluri (strain 93-146).